The following is a 362-amino-acid chain: MKHPLEELKDPTENLLLWIGRFLRYKCTSLSNSQVKDQNKVFECLNELNQACSSSQLEKVCKKARNAGLLGINTYALPLLKFHEYFSKARLITERLAFNSLKNIDEVMLAEFLSVYTGGLSLATKKNYRIALLGLFSYIDKQNQDENEKSYIYNITLKNISGVNQSAGNKLPTHLNNEELEKFLESIDKIEMSAKVRARNRLLIKIIVFTGMRSNEALQLKIKDFTLENGCYTILIKGKGDKYRAVMLKAFHIESLLKEWLIERELYPVKNDLLFCNQKGSALTQAYLYKQVERIINFAGLRREKNGAHMLRHSFATLLYQKRHDLILVQEALGHASLNTSRIYTHFDKQRLEEAASIWEEN.

The 98-residue stretch at 43–140 (ECLNELNQAC…ALLGLFSYID (98 aa)) folds into the Core-binding (CB) domain. One can recognise a Tyr recombinase domain in the interval 170 to 357 (KLPTHLNNEE…DKQRLEEAAS (188 aa)). Catalysis depends on residues Arg213, Lys239, His309, Arg312, and His335. Catalysis depends on Tyr344, which acts as the O-(3'-phospho-DNA)-tyrosine intermediate.

The protein belongs to the 'phage' integrase family. XerH subfamily.

The protein localises to the cytoplasm. Its activity is regulated as follows. FtsK is required for recombination. Its function is as follows. Site-specific tyrosine recombinase, which acts by catalyzing the cutting and rejoining of the recombining DNA molecules. Involved in chromosome segregation. May contribute to chromosome decatenation. This Helicobacter pylori (strain ATCC 700392 / 26695) (Campylobacter pylori) protein is Tyrosine recombinase XerH.